The sequence spans 454 residues: Mannosylfructose-phosphate synthase (454 aa).

It belongs to the glycosyltransferase 1 family. It depends on Mg(2+) as a cofactor. Requires Mn(2+) as cofactor.

It catalyses the reaction beta-D-fructose 6-phosphate + GDP-alpha-D-mannose = beta-D-fructofuranosyl alpha-D-mannopyranoside 6(F)-phosphate + GDP + H(+). Its pathway is carbohydrate metabolism; mannosylfructose biosynthesis; beta-D-fructofuranosyl alpha-D-mannopyranoside from D-fructose 6-phosphate and GDP-alpha-D-mannose: step 1/2. In Agrobacterium fabrum (strain C58 / ATCC 33970) (Agrobacterium tumefaciens (strain C58)), this protein is Mannosylfructose-phosphate synthase.